A 327-amino-acid polypeptide reads, in one-letter code: tRNA-modifying protein YgfZ (327 aa).

Folate is bound by residues W27 and W189.

Belongs to the tRNA-modifying YgfZ family.

It is found in the cytoplasm. Folate-binding protein involved in regulating the level of ATP-DnaA and in the modification of some tRNAs. It is probably a key factor in regulatory networks that act via tRNA modification, such as initiation of chromosomal replication. The polypeptide is tRNA-modifying protein YgfZ (Klebsiella pneumoniae (strain 342)).